A 570-amino-acid chain; its full sequence is MSEKHPGPLVVEGKLSDAERMKLESNYLRGTIAEDLNDGLTGGFKGDNFLLIRFHGMYQQDDRDIRAERAAQKLEPRHAMLLRCRLPGGVITTTQWKAIDKFAAENTIYGSIRLTNRQTFQFHGILKKNVKPVHQMLHSVGLDALATANDMNRNVLCTSNPYESQLHAEAYEWAKKISEHLLPRTRAYAEIWLDQKKVATTDEEPILGQTYLPRKFKTTVVIPPQNDIDLHANDMNFVAIAENGKLVGFNLLVGGGLSIEHGNKKTYARTASEFGYLPLEHTLAVAEAVVTTQRDWGNRTDRKNAKTKYTLERVGVETFKAEVERRAGIKFEPIRPYEFTGRGDRIGWVKGIDDKWHLTLFIENGRILDYPGRPLKTGLLEIAKVHQGEFRITANQNLIVASVPEDQKARIEKLARDHGLMNAVTPQRENSMACVSFPTCPLAMAEAERFLPSFIDKVEGVMSKHGVSDEHIVTRVTGCPNGCGRAMLAEVGLVGKAPGRYNLHIGGNRNGTRIPRMYRENITESEILDSLDELVGRWAKEREAGEGFGDFTVRAGIIRPVLDPARDFWE.

4 residues coordinate [4Fe-4S] cluster: Cys434, Cys440, Cys479, and Cys483. Residue Cys483 participates in siroheme binding.

It belongs to the nitrite and sulfite reductase 4Fe-4S domain family. As to quaternary structure, alpha(8)-beta(8). The alpha component is a flavoprotein, the beta component is a hemoprotein. Requires siroheme as cofactor. [4Fe-4S] cluster serves as cofactor.

It carries out the reaction hydrogen sulfide + 3 NADP(+) + 3 H2O = sulfite + 3 NADPH + 4 H(+). Its pathway is sulfur metabolism; hydrogen sulfide biosynthesis; hydrogen sulfide from sulfite (NADPH route): step 1/1. Component of the sulfite reductase complex that catalyzes the 6-electron reduction of sulfite to sulfide. This is one of several activities required for the biosynthesis of L-cysteine from sulfate. This chain is Sulfite reductase [NADPH] hemoprotein beta-component, found in Klebsiella pneumoniae subsp. pneumoniae (strain ATCC 700721 / MGH 78578).